The following is a 1395-amino-acid chain: DNA-directed RNA polymerase subunit beta' (1395 aa).

Zn(2+) is bound by residues Cys70, Cys72, Cys85, and Cys88. Mg(2+)-binding residues include Asp470, Asp472, and Asp474. Residues Cys815, Cys889, Cys896, and Cys899 each coordinate Zn(2+).

It belongs to the RNA polymerase beta' chain family. As to quaternary structure, the RNAP catalytic core consists of 2 alpha, 1 beta, 1 beta' and 1 omega subunit. When a sigma factor is associated with the core the holoenzyme is formed, which can initiate transcription. The cofactor is Mg(2+). Zn(2+) is required as a cofactor.

The catalysed reaction is RNA(n) + a ribonucleoside 5'-triphosphate = RNA(n+1) + diphosphate. In terms of biological role, DNA-dependent RNA polymerase catalyzes the transcription of DNA into RNA using the four ribonucleoside triphosphates as substrates. The polypeptide is DNA-directed RNA polymerase subunit beta' (Anaeromyxobacter sp. (strain Fw109-5)).